The primary structure comprises 155 residues: 2-C-methyl-D-erythritol 2,4-cyclodiphosphate synthase (155 aa).

Asp8 and His10 together coordinate a divalent metal cation. 4-CDP-2-C-methyl-D-erythritol 2-phosphate is bound by residues 8 to 10 (DVH) and 34 to 35 (HS). Position 42 (His42) interacts with a divalent metal cation. 4-CDP-2-C-methyl-D-erythritol 2-phosphate is bound by residues 56–58 (DIG), 61–65 (FPDSD), 100–106 (AQKPKML), 132–135 (TTEE), Phe139, and Lys142.

This sequence belongs to the IspF family. As to quaternary structure, homotrimer. It depends on a divalent metal cation as a cofactor.

The enzyme catalyses 4-CDP-2-C-methyl-D-erythritol 2-phosphate = 2-C-methyl-D-erythritol 2,4-cyclic diphosphate + CMP. Its pathway is isoprenoid biosynthesis; isopentenyl diphosphate biosynthesis via DXP pathway; isopentenyl diphosphate from 1-deoxy-D-xylulose 5-phosphate: step 4/6. Functionally, involved in the biosynthesis of isopentenyl diphosphate (IPP) and dimethylallyl diphosphate (DMAPP), two major building blocks of isoprenoid compounds. Catalyzes the conversion of 4-diphosphocytidyl-2-C-methyl-D-erythritol 2-phosphate (CDP-ME2P) to 2-C-methyl-D-erythritol 2,4-cyclodiphosphate (ME-CPP) with a corresponding release of cytidine 5-monophosphate (CMP). In Clostridium botulinum (strain ATCC 19397 / Type A), this protein is 2-C-methyl-D-erythritol 2,4-cyclodiphosphate synthase.